Consider the following 588-residue polypeptide: Cation channel sperm-associated protein 2 (588 aa).

Residues 1 to 106 (MAQEQGHFQL…LWAGWVLDSS (106 aa)) are Cytoplasmic-facing. A helical membrane pass occupies residues 107-129 (VFSKFIISLIFLNTFVLMVEIEL). The Extracellular segment spans residues 130–138 (MESTNTALW). The chain crosses the membrane as a helical span at residues 139 to 164 (PVKLALEVADWFILLSFIVEILLMWL). The Cytoplasmic portion of the chain corresponds to 165 to 173 (ASFSLFWKD). The helical transmembrane segment at 174–198 (AWNVFDFFVTLLSLLPELVVLLGVP) threads the bilayer. Residues 199–201 (AHS) lie on the Extracellular side of the membrane. A helical transmembrane segment spans residues 202 to 220 (VWLQLLRVCRVLRSLKLFA). The Cytoplasmic segment spans residues 221-237 (RFRQIKVILLALVRALK). Residues 238-260 (SMTFLLMLLLIFFYIFAVTGVYF) form a helical membrane-spanning segment. Residues 261–279 (FREYSRSTIEGLEYNMFFS) are Extracellular-facing. An intramembrane region (helical; Pore-forming) is located at residues 280-292 (DLLNSLVTVFILF). Over 293–312 (TLDHWYAVLQDIWKVPESSR) the chain is Extracellular. A helical membrane pass occupies residues 313 to 339 (VFSSIYVILWLLLGSIIFRNIIVAMMV). Topologically, residues 340 to 588 (TNFQNIRSEL…VQALMSFEDK (249 aa)) are cytoplasmic. The tract at residues 376-512 (SESLRGTSLG…YPVSHSISSH (137 aa)) is disordered. Residues 390–439 (DIIETSDASDDDDDDDDDDDDDDDDDDDKSDATESDNEESDSENSESENS) are compositionally biased toward acidic residues. Basic and acidic residues predominate over residues 440–502 (ESEKIDPEKD…KVKEESKEKA (63 aa)).

It belongs to the cation channel sperm-associated (TC 1.A.1.19) family. In terms of assembly, component of the CatSper complex or CatSpermasome composed of the core pore-forming members CATSPER1, CATSPER2, CATSPER3 and CATSPER4 as well as auxiliary members CATSPERB, CATSPERG2, CATSPERD, CATSPERE, CATSPERZ, C2CD6/CATSPERT, SLCO6C1, TMEM249, TMEM262 and EFCAB9. HSPA1 may be an additional auxiliary complex member. The core complex members CATSPER1, CATSPER2, CATSPER3 and CATSPER4 form a heterotetrameric channel. The auxiliary CATSPERB, CATSPERG2, CATSPERD and CATSPERE subunits form a pavilion-like structure over the pore which stabilizes the complex through interactions with CATSPER4, CATSPER3, CATSPER1 and CATSPER2 respectively. SLCO6C1 interacts with CATSPERE and TMEM262/CATSPERH interacts with CATSPERB, further stabilizing the complex. C2CD6/CATSPERT interacts at least with CATSPERD and is required for targeting the CatSper complex in the flagellar membrane. Interacts with Ca(v)3.3/CACNA1I, leading to suppression of T-type calcium channel activity. Testis-specific.

It is found in the cell projection. It localises to the cilium. The protein localises to the flagellum membrane. It catalyses the reaction Ca(2+)(in) = Ca(2+)(out). Its activity is regulated as follows. In contrast to the human ortholog, not activated by progesterone. Activated by intracellular alkalinization. Its function is as follows. Pore-forming subunit of the CatSper complex, a sperm-specific voltage-gated calcium channel that plays a central role in sperm cell hyperactivation. Controls calcium entry to mediate the hyperactivated motility, a step needed for sperm motility which is essential late in the preparation of sperm for fertilization. The sequence is that of Cation channel sperm-associated protein 2 (Catsper2) from Mus musculus (Mouse).